The sequence spans 351 residues: MKSAMTSSPLRVAIIGAGQVADKVHASYYCTRNDLELVAVCDSRLSQAQALAEKYGNASVWDDPQAMLLAVKPDVVSVCSPNRFHYEHTLMALEAGCHVMCEKPPAMTPEQAREMCDTARKLGKVLAYDFHHRFALDTQQLREQVTNGVLGEIYVTTARALRRCGVPGWGVFTNKELQGGGPLIDIGIHMLDAAMYVLGFPAVKSVNAHSFQKIGTQKSCGQFGEWDPATYSVEDSLFGTIEFHNGGILWLETSFALNIREQSIMNVSFCGDKAGATLFPAHIYTDNNGELMTLMQREIADDNRHLRSMEAFINHVQGKPVMIADAEQGYIIQQLVAALYQSAETGTRVEL.

Belongs to the Gfo/Idh/MocA family.

It catalyses the reaction a D-glucoside + NAD(+) = a 3-dehydro-D-glucoside + NADH + H(+). Catalyzes the NADH-dependent reduction of the oxo group at C3 of 3-dehydro-D-glucosides leading to D-glucosides. Probably functions in a metabolic pathway that transforms D-gulosides to D-glucosides. Can use 3-dehydro-D-glucose, methyl alpha-3-dehydro-D-glucoside and methyl beta-3-dehydro-D-glucoside as substrates in vitro. However, the actual specific physiological substrates for this metabolic pathway are unknown. To a lesser extent, is also able to catalyze the reverse reactions, i.e. the NAD(+)-dependent oxidation of the hydroxyl group at C3 of D-glucosides leading to 3-dehydro-D-glucosides. Cannot act on UDP-glucose, UDP-N-acetyl-D-glucosamine, D-glucosamine, N-acetyl-D-glucosamine, or UDP-D-galactose. The chain is D-glucoside 3-dehydrogenase (ycjS) from Escherichia coli (strain K12).